The sequence spans 364 residues: Protein-glutamate methylesterase/protein-glutamine glutaminase 1 (364 aa).

Residues 6-123 (KVLCVDDSAL…RDGMLDYSEK (118 aa)) form the Response regulatory domain. Asp-57 carries the post-translational modification 4-aspartylphosphate. The region spanning 165–357 (LVSTEKLIIV…RRIMARLASM (193 aa)) is the CheB-type methylesterase domain. Active-site residues include Ser-177, His-203, and Asp-299.

Belongs to the CheB family. Post-translationally, phosphorylated by CheA. Phosphorylation of the N-terminal regulatory domain activates the methylesterase activity.

It is found in the cytoplasm. The enzyme catalyses [protein]-L-glutamate 5-O-methyl ester + H2O = L-glutamyl-[protein] + methanol + H(+). It carries out the reaction L-glutaminyl-[protein] + H2O = L-glutamyl-[protein] + NH4(+). In terms of biological role, involved in chemotaxis. Part of a chemotaxis signal transduction system that modulates chemotaxis in response to various stimuli. Catalyzes the demethylation of specific methylglutamate residues introduced into the chemoreceptors (methyl-accepting chemotaxis proteins or MCP) by CheR. Also mediates the irreversible deamidation of specific glutamine residues to glutamic acid. The protein is Protein-glutamate methylesterase/protein-glutamine glutaminase 1 of Burkholderia mallei (strain ATCC 23344).